Reading from the N-terminus, the 249-residue chain is Type III pantothenate kinase (249 aa).

6 to 13 contributes to the ATP binding site; that stretch reads DCGNSFIK. Substrate is bound by residues Y93 and 100–103; that span reads GMDR. The active-site Proton acceptor is the D102. Position 122 (D122) interacts with K(+). T125 contributes to the ATP binding site. T181 is a binding site for substrate.

The protein belongs to the type III pantothenate kinase family. Homodimer. Requires NH4(+) as cofactor. The cofactor is K(+).

Its subcellular location is the cytoplasm. The catalysed reaction is (R)-pantothenate + ATP = (R)-4'-phosphopantothenate + ADP + H(+). It functions in the pathway cofactor biosynthesis; coenzyme A biosynthesis; CoA from (R)-pantothenate: step 1/5. In terms of biological role, catalyzes the phosphorylation of pantothenate (Pan), the first step in CoA biosynthesis. This Pseudomonas putida (strain W619) protein is Type III pantothenate kinase.